A 201-amino-acid polypeptide reads, in one-letter code: Putative toxin HigB2 (201 aa).

It belongs to the mycobacterial HigB family.

Its function is as follows. Putative toxic component of a type II toxin-antitoxin (TA) system. Its cognate antitoxin would be HigA2. In Mycobacterium tuberculosis (strain ATCC 25618 / H37Rv), this protein is Putative toxin HigB2.